The following is a 119-amino-acid chain: Protein BEX4 (119 aa).

The segment at 1–53 is disordered; that stretch reads MESKEELAANNLNGENAQQENEGREQAPTQNEETRHLGGGEGQKPGGNIRRGR. Residues 8–20 are compositionally biased toward low complexity; sequence AANNLNGENAQQE. Positions 31 to 89 are interaction with SIRT2; sequence NEETRHLGGGEGQKPGGNIRRGRVRRLVPNFRWAIPNRHIEHNEARDDVERFVGQMMEI. Residues 31 to 119 are interaction with alpha-tubulin; that stretch reads NEETRHLGGG…DNHYDFCLIP (89 aa). Cys116 serves as a coordination point for Zn(2+).

Belongs to the BEX family. In terms of assembly, interacts with alpha-tubulin. Interacts with SIRT2. Post-translationally, ubiquitinated and degraded by the proteasome.

The protein resides in the cytoplasm. Its subcellular location is the cytoskeleton. It localises to the spindle pole. The protein localises to the nucleus. May play a role in microtubule deacetylation by negatively regulating the SIRT2 deacetylase activity toward alpha-tubulin and thereby participate in the control of cell cycle progression and genomic stability. In absence of reductive stress, acts as a pseudosubstrate for the CRL2(FEM1B) complex: associates with FEM1B via zinc, thereby preventing association between FEM1B and its substrates. The sequence is that of Protein BEX4 from Pongo abelii (Sumatran orangutan).